We begin with the raw amino-acid sequence, 222 residues long: 25 kDa elongation factor 1-beta (222 aa).

Residues threonine 75–lysine 94 show a composition bias toward low complexity. Residues threonine 75–glutamate 98 form a disordered region.

Belongs to the EF-1-beta/EF-1-delta family. In terms of assembly, EF-1 is composed of 4 subunits: alpha, beta, delta, and gamma.

Functionally, EF-1-beta and EF-1-delta stimulate the exchange of GDP bound to EF-1-alpha to GTP. The protein is 25 kDa elongation factor 1-beta of Trypanosoma cruzi.